Consider the following 419-residue polypeptide: Tyrosine--tRNA ligase 2 (419 aa).

Tyrosine 34 contacts L-tyrosine. A 'HIGH' region motif is present at residues 39–48 (PTGDSMHIGH). L-tyrosine is bound by residues tyrosine 168 and glutamine 172. Positions 230-234 (KFGKS) match the 'KMSKS' region motif. ATP is bound at residue lysine 233. In terms of domain architecture, S4 RNA-binding spans 352–418 (KNIVEWLVDL…GKKNYSLVKL (67 aa)).

Belongs to the class-I aminoacyl-tRNA synthetase family. TyrS type 1 subfamily. Homodimer.

Its subcellular location is the cytoplasm. The enzyme catalyses tRNA(Tyr) + L-tyrosine + ATP = L-tyrosyl-tRNA(Tyr) + AMP + diphosphate + H(+). Catalyzes the attachment of tyrosine to tRNA(Tyr) in a two-step reaction: tyrosine is first activated by ATP to form Tyr-AMP and then transferred to the acceptor end of tRNA(Tyr). In Bacillus cereus (strain ZK / E33L), this protein is Tyrosine--tRNA ligase 2.